Reading from the N-terminus, the 747-residue chain is Protein PHTF2 (747 aa).

Residues 6–153 (TDAIVWYQKK…VHCQIVSTRT (148 aa)) enclose the PHTF domain. Helical transmembrane passes span 98–118 (VIFS…VLFC) and 126–146 (IPLT…TVHC). Disordered regions lie at residues 170–192 (KAAH…TQEG) and 268–365 (EDAA…SETE). Basic and acidic residues predominate over residues 172–181 (AHLEVHREGD). Residues 182–192 (GSSTTDNTQEG) are compositionally biased toward polar residues. N-linked (GlcNAc...) asparagine glycosylation occurs at N291. Over residues 321 to 331 (RNRKPHHYKKH) the composition is skewed to basic residues. Residues 340-352 (SGTSCSSRCSSSR) show a composition bias toward low complexity. Over residues 353–362 (QDSESTRPES) the composition is skewed to basic and acidic residues. 4 helical membrane-spanning segments follow: residues 459–479 (IGYQ…PFVF), 515–535 (VLIS…LLCV), 596–616 (VIVS…CAQL), and 630–650 (WELV…VTLG). N-linked (GlcNAc...) asparagine glycans are attached at residues N659 and N718. The chain crosses the membrane as a helical span at residues 722–742 (VVILSAVSGVISDLLGFNLKL).

The protein localises to the membrane. The polypeptide is Protein PHTF2 (Phtf2) (Mus musculus (Mouse)).